Reading from the N-terminus, the 529-residue chain is Lysophosphatidylcholine acyltransferase 2 (529 aa).

Over 1–50 (MPPPHRVFALPRQQSLLLPAVINPFVHDLSLSTADITKCFLLGIILVPLR) the chain is Cytoplasmic. Residues 51–71 (AIFLLLVLLVMWPVSVIITFG) form a helical; Signal-anchor for type II membrane protein membrane-spanning segment. Residues 72 to 529 (QSLKGVVEPM…EDSASDKKDD (458 aa)) are Lumenal-facing. The HXXXXD motif signature appears at 128–133 (HSSFFD). The EGTC motif signature appears at 202 to 205 (EGTC). Residue asparagine 207 is glycosylated (N-linked (GlcNAc...) asparagine). EF-hand domains are found at residues 373 to 408 (PISPALQQLFALFDRNGDGTIDFREYVIGVTVLCRP), 410 to 445 (NNEEVIQTAFKLFDIDEDNCITQEEFSSLLRSALGV), and 449 to 480 (DVHSLFREIDADGSGHITYDEFRSFALNHPEY). 15 residues coordinate Ca(2+): aspartate 386, asparagine 388, aspartate 390, threonine 392, glutamate 397, aspartate 423, aspartate 425, aspartate 427, cysteine 429, glutamate 434, aspartate 458, aspartate 460, serine 462, histidine 464, and glutamate 469.

The protein belongs to the 1-acyl-sn-glycerol-3-phosphate acyltransferase family.

Its subcellular location is the endoplasmic reticulum membrane. The protein localises to the golgi apparatus membrane. It localises to the cell membrane. It is found in the lipid droplet. The catalysed reaction is a 1-acyl-sn-glycero-3-phosphocholine + an acyl-CoA = a 1,2-diacyl-sn-glycero-3-phosphocholine + CoA. It catalyses the reaction a 1-O-alkyl-sn-glycero-3-phosphocholine + acetyl-CoA = a 1-O-alkyl-2-acetyl-sn-glycero-3-phosphocholine + CoA. It carries out the reaction a 1-acyl-sn-glycero-3-phosphate + an acyl-CoA = a 1,2-diacyl-sn-glycero-3-phosphate + CoA. The enzyme catalyses a 1-O-(1Z-alkenyl)-sn-glycero-3-phosphocholine + an acyl-CoA = a 1-O-(1Z-alkenyl)-2-acyl-sn-glycero-3-phosphocholine + CoA. The catalysed reaction is 1-hexadecanoyl-sn-glycero-3-phosphate + (9Z)-octadecenoyl-CoA = 1-hexadecanoyl-2-(9Z-octadecenoyl)-sn-glycero-3-phosphate + CoA. It catalyses the reaction 1-(9Z-octadecenoyl)-sn-glycero-3-phosphate + (9Z)-octadecenoyl-CoA = 1,2-di-(9Z-octadecenoyl)-sn-glycero-3-phosphate + CoA. It carries out the reaction 1-(9Z-octadecenoyl)-sn-glycero-3-phosphate + hexadecanoyl-CoA = 1-(9Z)-octadecenoyl-2-hexadecanoyl-sn-glycero-3-phosphate + CoA. The enzyme catalyses 1-heptadecanoyl-sn-glycero-3-phosphate + (9Z)-octadecenoyl-CoA = 1-heptadecanoyl-2-(9Z)-octadecenoyl-sn-glycero-3-phosphate + CoA. The catalysed reaction is 1-octadecanoyl-sn-glycero-3-phosphate + (9Z)-octadecenoyl-CoA = 1-octadecanoyl-2-(9Z-octadecenoyl)-sn-glycero-3-phosphate + CoA. It catalyses the reaction heptadecanoyl-CoA + 1-(9Z-octadecenoyl)-sn-glycero-3-phosphate = 1-(9Z)-octadecenoyl-2-heptadecanoyl-sn-glycero-3-phosphate + CoA. It carries out the reaction 1-(9Z-octadecenoyl)-sn-glycero-3-phosphate + (9Z,12Z)-octadecadienoyl-CoA = 1-(9Z)-octadecenoyl-2-(9Z,12Z)-octadecadienoyl-sn-glycero-3-phosphate + CoA. The enzyme catalyses 1-(9Z-octadecenoyl)-sn-glycero-3-phosphate + tetradecanoyl-CoA = 1-(9Z)-octadecenoyl-2-tetradecanoyl-sn-glycero-3-phosphate + CoA. The catalysed reaction is pentadecanoyl-CoA + 1-(9Z-octadecenoyl)-sn-glycero-3-phosphate = 1-(9Z)-octadecenoyl-2-pentadecanoyl-sn-glycero-3-phosphate + CoA. It catalyses the reaction nonadecanoyl-CoA + 1-(9Z-octadecenoyl)-sn-glycero-3-phosphate = 1-(9Z)-octadecenoyl-2-nonadecanoyl-sn-glycero-3-phosphate + CoA. It carries out the reaction 1-hexadecanoyl-sn-glycero-3-phosphocholine + (9Z)-octadecenoyl-CoA = 1-hexadecanoyl-2-(9Z-octadecenoyl)-sn-glycero-3-phosphocholine + CoA. The enzyme catalyses 1-O-hexadecyl-sn-glycero-3-phosphocholine + acetyl-CoA = 1-O-hexadecyl-2-acetyl-sn-glycero-3-phosphocholine + CoA. The catalysed reaction is 1-O-octadecyl-sn-glycero-3-phosphocholine + acetyl-CoA = 1-O-octadecyl-2-acetyl-sn-glycero-3-phosphocholine + CoA. It catalyses the reaction 1-hexadecanoyl-sn-glycero-3-phosphocholine + acetyl-CoA = 1-hexadecanoyl-2-acetyl-sn-glycero-3-phosphocholine + CoA. It carries out the reaction 1-octadecanoyl-sn-glycero-3-phosphocholine + acetyl-CoA = 1-octadecanoyl-2-acetyl-sn-glycero-3-phosphocholine + CoA. The enzyme catalyses a 1-O-(1Z-alkenyl)-sn-glycero-3-phosphocholine + acetyl-CoA = 1-O-(1Z)-alkenyl-2-acetyl-sn-glycero-3-phosphocholine + CoA. The catalysed reaction is 1-O-octadecyl-sn-glycero-3-phosphocholine + (5Z,8Z,11Z,14Z)-eicosatetraenoyl-CoA = 1-O-octadecyl-2-(5Z,8Z,11Z,14Z)-eicosatetraenoyl-sn-glycero-3-phosphocholine + CoA. The protein operates within lipid metabolism; phospholipid metabolism. Its function is as follows. Exhibits both acyltransferase and acetyltransferase activities. Activity is calcium-dependent. Catalyzes the conversion of lysophosphatidylcholine (1-acyl-sn-glycero-3-phosphocholine or LPC) into phosphatidylcholine (1,2-diacyl-sn-glycero-3-phosphocholine or PC). Catalyzes the conversion 1-acyl-sn-glycerol-3-phosphate (lysophosphatidic acid or LPA) into 1,2-diacyl-sn-glycerol-3-phosphate (phosphatidic acid or PA) by incorporating an acyl moiety at the sn-2 position of the glycerol backbone. Involved in platelet-activating factor (PAF) biosynthesis by catalyzing the conversion of the PAF precursor, 1-O-alkyl-sn-glycero-3-phosphocholine (lyso-PAF) into 1-O-alkyl-2-acetyl-sn-glycero-3-phosphocholine (PAF). This chain is Lysophosphatidylcholine acyltransferase 2 (lpcat2), found in Danio rerio (Zebrafish).